Consider the following 206-residue polypeptide: Small ribosomal subunit protein uS4 (206 aa).

The S4 RNA-binding domain maps to 96 to 168; the sequence is SRLDNVVYRM…LELAEQREKP (73 aa).

The protein belongs to the universal ribosomal protein uS4 family. Part of the 30S ribosomal subunit. Contacts protein S5. The interaction surface between S4 and S5 is involved in control of translational fidelity.

Its function is as follows. One of the primary rRNA binding proteins, it binds directly to 16S rRNA where it nucleates assembly of the body of the 30S subunit. In terms of biological role, with S5 and S12 plays an important role in translational accuracy. The protein is Small ribosomal subunit protein uS4 of Baumannia cicadellinicola subsp. Homalodisca coagulata.